A 245-amino-acid chain; its full sequence is U21-ctenitoxin-Pn1a (245 aa).

The 245-residue stretch at 1–245 (IVYGTVTTPG…FRSWMDKVMT (245 aa)) folds into the Peptidase S1 domain. Cys30 and Cys46 are joined by a disulfide. Active-site charge relay system residues include His45 and Asp95. 2 disulfides stabilise this stretch: Cys161-Cys183 and Cys192-Cys221. The active-site Charge relay system is the Ser196.

Expressed by the venom gland.

It is found in the secreted. Protease. Hydrolyzes gelatin and succinyl casein. The sequence is that of U21-ctenitoxin-Pn1a from Phoneutria nigriventer (Brazilian armed spider).